The chain runs to 261 residues: Protein-ADP-ribose hydrolase (261 aa).

The 188-residue stretch at 74–261 (ADLKPVTGRG…DEALYNKLMS (188 aa)) folds into the Macro domain. 3 residues coordinate ADP-D-ribose: Asp93, Ile94, and Asn107. Zn(2+)-binding residues include Cys113, His118, and Cys120. ADP-D-ribose is bound by residues Cys120, Ile121, Asp122, Ser211, Thr212, Gly213, and Phe215.

The protein belongs to the MacroD-type family. Zn-Macro subfamily. Zn(2+) is required as a cofactor.

It carries out the reaction 4-O-(ADP-D-ribosyl)-L-aspartyl-[protein] + H2O = L-aspartyl-[protein] + ADP-D-ribose + H(+). In terms of biological role, ADP-ribosylhydrolase that specifically reverses the SirTM-mediated mono-ADP-ribosylation at an asparatate residue of GcvH-L, by releasing ADP-ribose from the target protein. May play a role in the regulation of the response to host-induced oxidative stress. In Treponema medium, this protein is Protein-ADP-ribose hydrolase.